A 53-amino-acid polypeptide reads, in one-letter code: uncharacterized protein (53 aa).

The segment covering 1 to 10 (MHILTRSSKN) has biased composition (polar residues). A disordered region spans residues 1–25 (MHILTRSSKNAFPRSRSRQDIHISS).

This is an uncharacterized protein from Saccharomyces cerevisiae (strain ATCC 204508 / S288c) (Baker's yeast).